The sequence spans 447 residues: Probable glycine dehydrogenase (decarboxylating) subunit 1 (447 aa).

This sequence belongs to the GcvP family. N-terminal subunit subfamily. As to quaternary structure, the glycine cleavage system is composed of four proteins: P, T, L and H. In this organism, the P 'protein' is a heterodimer of two subunits.

It carries out the reaction N(6)-[(R)-lipoyl]-L-lysyl-[glycine-cleavage complex H protein] + glycine + H(+) = N(6)-[(R)-S(8)-aminomethyldihydrolipoyl]-L-lysyl-[glycine-cleavage complex H protein] + CO2. In terms of biological role, the glycine cleavage system catalyzes the degradation of glycine. The P protein binds the alpha-amino group of glycine through its pyridoxal phosphate cofactor; CO(2) is released and the remaining methylamine moiety is then transferred to the lipoamide cofactor of the H protein. This chain is Probable glycine dehydrogenase (decarboxylating) subunit 1, found in Maricaulis maris (strain MCS10) (Caulobacter maris).